The chain runs to 590 residues: Nuclear receptor subfamily 2 group C member 1 (590 aa).

Positions 1-166 (MATIEEIAHQ…RLQRCIAFGM (166 aa)) are required for interaction with KAT2B. Positions 98–173 (FDLCVVCGDK…FGMKQDSVQC (76 aa)) form a DNA-binding region, nuclear receptor. 2 NR C4-type zinc fingers span residues 101–121 (CVVC…CEGC) and 137–156 (CRGS…CQYC). Phosphoserine occurs at positions 185 and 203. The residue at position 208 (T208) is a Phosphothreonine. Residue T210 is modified to Phosphothreonine; by MAPK1. A Glycyl lysine isopeptide (Lys-Gly) (interchain with G-Cter in SUMO); alternate cross-link involves residue K238. K238 is covalently cross-linked (Glycyl lysine isopeptide (Lys-Gly) (interchain with G-Cter in SUMO2); alternate). An NR LBD domain is found at 333-577 (EGMEGSPHLI…SVIPHILKME (245 aa)). Phosphoserine; by PKC is present on residues S461 and S568. The required for interaction with NRIP1 stretch occupies residues 571–590 (PHILKMEPADYNSQIIGHSL). A Glycyl lysine isopeptide (Lys-Gly) (interchain with G-Cter in SUMO2) cross-link involves residue K575.

It belongs to the nuclear hormone receptor family. NR2 subfamily. As to quaternary structure, homodimer. Heterodimer; with NR2C2 which is required for chromatin remodeling and for binding to promoter regions such as globin DR1 repeats. Interacts with ESR1; the interaction prevents homodimerization of ESR1 and suppresses its transcriptional activity and cell growth. Interacts with NRIP1 (via its LXXLL motifs); the interaction provides corepressor activity. Interacts with HDAC3 (via the DNA-binding domain); the interaction recruits phosphorylated NR2C1 to PML bodies for sumoylation. Interacts with HDAC4 (via the DNA-binding domain). Interacts with PIAS1; the interaction is required for sumoylation of NR2C1. Interacts with UBE2I; the interaction is required for sumoylation of NR2C1. Interacts with KAT2B; the interaction acts as a corepressor of gene expression. Sumoylation requires both PIAS1 and UBE2I. Sumoylation appears to dissociate NR2C1 from the PML nuclear bodies. Enhances the interaction with NRIP1 but inhibits interaction with KAT2B. In proliferating cells, stimulation by all-trans retinoic acid, activation of MAPK1-mediated phosphorylation and recruitment to PML bodies with subsequent sumoylation, suppresses OCT4 expression. Post-translationally, phosphorylated on several serine and threonine residues. Phosphorylation on Thr-210, stimulated by all-trans retinoic acid (atRA) mediates PML location and sumoylation in proliferating cells which then modulates its association with effector molecules, KAT2B and NRIP1. Phosphorylation on Ser-568 by PKC is important for protein stability and function as activator of RARB. In terms of tissue distribution, isoform 1 is highly expressed in the adlumenal compartment of the seminiferous tubule of adult testes (at protein level) and in the eyes of newborn animals. Weakly expressed in other adult organs including the seminal vesicle, prostate, ovary, adrenal gland, heart, thymus, placenta and brain. Expressed during embryonic stages in developing eyes, brain and cartilage primordia (at protein level). Also expressed in the developing spinal motor neurons and in the sympathetic-, parasympathetic- and sensory ganglia of the embryonic PNS. Expressed in the developing neural epithelia of the inner ear, nasal cavity, tongue and retina. At day 16.5, expressed in various tissues including kidney and intestine. In contrast, isoform 2 is widely expressed at a low level throughout the adult testis.

It is found in the nucleus. The protein localises to the PML body. In terms of biological role, orphan nuclear receptor. Binds the IR7 element in the promoter of its own gene in an autoregulatory negative feedback mechanism. Primarily repressor of a broad range of genes including ESR1 and RARB. Together with NR2C2, forms the core of the DRED (direct repeat erythroid-definitive) complex that represses embryonic and fetal globin transcription. Binds to hormone response elements (HREs) consisting of two 5'-AGGTCA-3' half site direct repeat consensus sequences. Also activator of OCT4 gene expression. Plays a fundamental role in early embryogenesis and regulates embryonic stem cell proliferation and differentiation. Mediator of retinoic acid-regulated preadipocyte proliferation. In Mus musculus (Mouse), this protein is Nuclear receptor subfamily 2 group C member 1.